We begin with the raw amino-acid sequence, 533 residues long: 2,3-bisphosphoglycerate-independent phosphoglycerate mutase (533 aa).

Residues D15 and S65 each coordinate Mn(2+). The Phosphoserine intermediate role is filled by S65. Substrate contacts are provided by residues H126, 156–157, R188, R194, 258–261, and K331; these read RD and RPDR. Mn(2+) is bound by residues D398, H402, D439, H440, and H457.

It belongs to the BPG-independent phosphoglycerate mutase family. In terms of assembly, monomer. It depends on Mn(2+) as a cofactor.

It catalyses the reaction (2R)-2-phosphoglycerate = (2R)-3-phosphoglycerate. The protein operates within carbohydrate degradation; glycolysis; pyruvate from D-glyceraldehyde 3-phosphate: step 3/5. Functionally, catalyzes the interconversion of 2-phosphoglycerate and 3-phosphoglycerate. The protein is 2,3-bisphosphoglycerate-independent phosphoglycerate mutase of Trichormus variabilis (strain ATCC 29413 / PCC 7937) (Anabaena variabilis).